Here is a 343-residue protein sequence, read N- to C-terminus: MHPPPPGPLGDCLRDWEELQQDFHGIQETHRLYRLKLEELTKLQNSCTSSITRQKKRLQELALVLRKCKPSLPSEAEEAARELENQIKERQGLFFDMEAYLPKKNGLYLSLVLGNVNVTLLSKQAKFAYKDEYEKFKLYLTIILILISFTCRFLLNSRVTDAAFNFLLVWYYCTLTIRESILINNGSRIKGWWVFHHYVSTFLSGVMLTWPDGLMYQKFRNQFLSFSMYQSFVQFLQYYYQSGCLYRLRALGERHTMDLTVEGFQSWMWRGLTFLLPFLFFGHFWQLFNALTLFNLARDPECKEWQVLMCGFPFLLLFLGNFFTTLRVVHQKFHNQLHGSKKE.

Over 1-132 (MHPPPPGPLG…KQAKFAYKDE (132 aa)) the chain is Cytoplasmic. Lysine 130 contributes to the CoA binding site. The chain crosses the membrane as a helical span at residues 133–152 (YEKFKLYLTIILILISFTCR). Over 153–158 (FLLNSR) the chain is Extracellular. Residues 159-177 (VTDAAFNFLLVWYYCTLTI) form a helical membrane-spanning segment. Topologically, residues 178–190 (RESILINNGSRIK) are cytoplasmic. CoA is bound by residues serine 187 and arginine 188. Residues 191–209 (GWWVFHHYVSTFLSGVMLT) traverse the membrane as a helical segment. The Extracellular segment spans residues 210 to 218 (WPDGLMYQK). A helical membrane pass occupies residues 219 to 240 (FRNQFLSFSMYQSFVQFLQYYY). The CoA site is built by glutamine 237, tyrosine 240, glutamine 241, and histidine 283. At 241–270 (QSGCLYRLRALGERHTMDLTVEGFQSWMWR) the chain is on the cytoplasmic side. A helical transmembrane segment spans residues 271 to 294 (GLTFLLPFLFFGHFWQLFNALTLF). Topologically, residues 295 to 304 (NLARDPECKE) are extracellular. Residues 305-330 (WQVLMCGFPFLLLFLGNFFTTLRVVH) form a helical membrane-spanning segment. Residues 331–343 (QKFHNQLHGSKKE) are Cytoplasmic-facing. Position 332 (lysine 332) interacts with CoA.

It belongs to the TMEM120 family. Homodimer. Forms heterooligomer with TMEM120B. Interacts with PKD2; TMEM120A inhibits PKD2 channel activity through the physical association of PKD2 with TMEM120A.

Its subcellular location is the cell membrane. It is found in the nucleus inner membrane. The protein localises to the endoplasmic reticulum. Functionally, multifunctional protein involved in mechanosensation, and plays an essential role in lipid metabolism and adipocyte differentiation. May function as an ion channel involved in sensing mechanical stimuli. Mediates the mechanosensitivity of the PKD2-TMEM120A channel complex through direct physical interaction. TMEM120A seems to affect mechanosensation by inhibiting PIEZO2 channels, possibly by altering cellular lipid content. TMEM120A is structurally similar to a lipid-modifying enzyme, ELOVL7, and contains a bound coenzyme A molecule, which suggests it might function as an enzyme in lipid metabolism. Additionnaly, implicated in innate immune response against Zika virus. Acts as a key activator of the antiviral signaling involving STING1. This chain is Transmembrane protein 120A, found in Bos taurus (Bovine).